Reading from the N-terminus, the 383-residue chain is BRISC and BRCA1-A complex member 2 (383 aa).

Residue Met-1 is modified to N-acetylmethionine. Ser-2 carries the post-translational modification Phosphoserine. 2 UEV-like regions span residues 30–147 (DATN…TLLE) and 275–364 (IAAF…RAKA).

Belongs to the BABAM2 family. In terms of assembly, component of the ARISC complex, at least composed of UIMC1/RAP80, ABRAXAS1, BRCC3/BRCC36, BABAM2 and BABAM1/NBA1. Component of the BRCA1-A complex, at least composed of BRCA1, BARD1, UIMC1/RAP80, ABRAXAS1, BRCC3/BRCC36, BABAM2 and BABAM1/NBA1. In the BRCA1-A complex, interacts directly with ABRAXAS1, BRCC3/BRCC36 and BABAM1/NBA1. Binds polyubiquitin. Component of the BRISC complex, at least composed of ABRAXAS2, BRCC3/BRCC36, BABAM2 and BABAM1/NBA1. Identified in a complex with SHMT2 and the other subunits of the BRISC complex. Component of the BRCA1/BRCA2 containing complex (BRCC), which also contains BRCA1, BRCA2, BARD1, BRCC3/BRCC36 and RAD51. BRCC is a ubiquitin E3 ligase complex that enhances cellular survival following DNA damage. May interact with FAS and TNFRSF1A.

Its subcellular location is the cytoplasm. It localises to the nucleus. Functionally, component of the BRCA1-A complex, a complex that specifically recognizes 'Lys-63'-linked ubiquitinated histones H2A and H2AX at DNA lesions sites, leading to target the BRCA1-BARD1 heterodimer to sites of DNA damage at double-strand breaks (DSBs). The BRCA1-A complex also possesses deubiquitinase activity that specifically removes 'Lys-63'-linked ubiquitin on histones H2A and H2AX. In the BRCA1-A complex, it acts as an adapter that bridges the interaction between BABAM1/NBA1 and the rest of the complex, thereby being required for the complex integrity and modulating the E3 ubiquitin ligase activity of the BRCA1-BARD1 heterodimer. Component of the BRISC complex, a multiprotein complex that specifically cleaves 'Lys-63'-linked ubiquitin in various substrates. Within the BRISC complex, acts as an adapter that bridges the interaction between BABAM1/NBA1 and the rest of the complex, thereby being required for the complex integrity. The BRISC complex is required for normal mitotic spindle assembly and microtubule attachment to kinetochores via its role in deubiquitinating NUMA1. The BRISC complex plays a role in interferon signaling via its role in the deubiquitination of the interferon receptor IFNAR1; deubiquitination increases IFNAR1 activity by enhancing its stability and cell surface expression. Down-regulates the response to bacterial lipopolysaccharide (LPS) via its role in IFNAR1 deubiquitination. May play a role in homeostasis or cellular differentiation in cells of neural, epithelial and germline origins. May also act as a death receptor-associated anti-apoptotic protein, which inhibits the mitochondrial apoptotic pathway. May regulate TNF-alpha signaling through its interactions with TNFRSF1A; however these effects may be indirect. The sequence is that of BRISC and BRCA1-A complex member 2 from Rattus norvegicus (Rat).